Reading from the N-terminus, the 250-residue chain is MPNDNRLAPAALAAQAAALPAAWRHVLEQPAVARAFASVLGHVEQRLAEGAVVYPATPFRALDQLAPADVRVVILGQDPYHGPGQAQGLAFSVPDDCKCPPSLRNIFNEIAVDYPRPTRHDLSAWTRQGVLLLNTSLTVEDGQPGSHAKRGWETVTDALIAEVARDPSPKVFLLWGAHAQAKQALVPADAGHLVLAANHPSPLSARRPPVPFVGCGHFRQTNAWLQQRGQKPVDWSGEQNNASRQGEFAL.

The active-site Proton acceptor is Asp-78. Residues 228–250 (RGQKPVDWSGEQNNASRQGEFAL) are disordered.

Belongs to the uracil-DNA glycosylase (UDG) superfamily. UNG family.

Its subcellular location is the cytoplasm. It carries out the reaction Hydrolyzes single-stranded DNA or mismatched double-stranded DNA and polynucleotides, releasing free uracil.. Excises uracil residues from the DNA which can arise as a result of misincorporation of dUMP residues by DNA polymerase or due to deamination of cytosine. This Bordetella parapertussis (strain 12822 / ATCC BAA-587 / NCTC 13253) protein is Uracil-DNA glycosylase.